A 550-amino-acid polypeptide reads, in one-letter code: Transcription factor 7-like 1-D (550 aa).

The segment at 1–61 (MPQLNSGXGD…SENHSSDSDS (61 aa)) is interaction with CTNNB1-A. Disordered stretches follow at residues 1–77 (MPQL…EKPR), 182–212 (GTPP…PYYP), 390–473 (WSAR…SLTT), and 488–514 (ASKS…SRPI). Composition is skewed to basic and acidic residues over residues 17 to 32 (ELIR…EKSP) and 52 to 77 (SENH…EKPR). The interaction with AES and TLE4-A stretch occupies residues 109-311 (LGGITCPMVP…SPNLSMKSNV (203 aa)). Positions 323–391 (IKKPLNAFML…LHSQLYPSWS (69 aa)) form a DNA-binding region, HMG box. Residues 406-415 (KQSPEMENYT) are compositionally biased toward basic and acidic residues. Residues 407-550 (QSPEMENYTK…PLPLVARSSD (144 aa)) form an interaction with CTBP-B region. A compositionally biased stretch (low complexity) spans 444–455 (SPATPSAALASP).

It belongs to the TCF/LEF family. As to quaternary structure, interacts with csnk1e, ctnnb1-A, ctbp-B, dact1-A and gsk3b. May interact with ase and tle4-A. Phosphorylated. Phosphorylation by csnk1e promotes binding to ctnnb1-A while phosphorylation by gsk3b may reverse this effect.

Its subcellular location is the nucleus. Its function is as follows. Participates in the Wnt signaling pathway. Binds to DNA and acts as a repressor in the absence of ctnnb1-A and possibly ctnnb1-B, and as an activator in the presence of these proteins. Required early in development for the establishment of the dorsal body axis in response to maternal Wnt signaling. The polypeptide is Transcription factor 7-like 1-D (tcf7l1-d) (Xenopus laevis (African clawed frog)).